The following is a 340-amino-acid chain: tRNA N6-adenosine threonylcarbamoyltransferase (340 aa).

Residues H113 and H117 each coordinate Fe cation. Substrate-binding positions include 135–139 (LVSGG), D169, G182, D186, and N274. D302 contributes to the Fe cation binding site.

This sequence belongs to the KAE1 / TsaD family. Fe(2+) serves as cofactor.

Its subcellular location is the cytoplasm. It catalyses the reaction L-threonylcarbamoyladenylate + adenosine(37) in tRNA = N(6)-L-threonylcarbamoyladenosine(37) in tRNA + AMP + H(+). In terms of biological role, required for the formation of a threonylcarbamoyl group on adenosine at position 37 (t(6)A37) in tRNAs that read codons beginning with adenine. Is involved in the transfer of the threonylcarbamoyl moiety of threonylcarbamoyl-AMP (TC-AMP) to the N6 group of A37, together with TsaE and TsaB. TsaD likely plays a direct catalytic role in this reaction. The polypeptide is tRNA N6-adenosine threonylcarbamoyltransferase (Mycolicibacterium smegmatis (strain ATCC 700084 / mc(2)155) (Mycobacterium smegmatis)).